The sequence spans 294 residues: MKIAIYGQYYQNSTEPIIKDIFAFFNSNNVEMVIEENFLNMLYEKQLVKKDYKTFPSNSALDNSFEMLISIGGDGTILRAAAFVRNSGVPLLGINAGRLGFLAKVQKENIDILLQYVINQNYTTSERTLLGLTCEPFNEAFKELNFAMNEVTVSRKDTTSMITVETYLNNEYLNSYWADGLIISTPTGSTGYSLSCGGPILTPDVKSLVITPIAPHNLTARPLVIPDDTEITLRVTGREDQYLVSLDSRISSVQNESVLKIKKTDYKIKMVEIPGETFLKTLRNKLLWGEDKRN.

The active-site Proton acceptor is the Asp74. NAD(+) contacts are provided by residues 74 to 75 (DG), Arg79, 149 to 150 (NE), Asp179, 190 to 195 (TGYSLS), and Ala214.

The protein belongs to the NAD kinase family. Requires a divalent metal cation as cofactor.

The protein resides in the cytoplasm. It catalyses the reaction NAD(+) + ATP = ADP + NADP(+) + H(+). In terms of biological role, involved in the regulation of the intracellular balance of NAD and NADP, and is a key enzyme in the biosynthesis of NADP. Catalyzes specifically the phosphorylation on 2'-hydroxyl of the adenosine moiety of NAD to yield NADP. This is NAD kinase from Flavobacterium johnsoniae (strain ATCC 17061 / DSM 2064 / JCM 8514 / BCRC 14874 / CCUG 350202 / NBRC 14942 / NCIMB 11054 / UW101) (Cytophaga johnsonae).